A 528-amino-acid polypeptide reads, in one-letter code: Tyrosine--tRNA ligase, cytoplasmic (528 aa).

M1 is subject to N-acetylmethionine. G2 carries the post-translational modification N-acetylglycine; in Tyrosine--tRNA ligase, cytoplasmic, N-terminally processed. An L-tyrosine-binding site is contributed by Y39. Y39 is a trans-resveratrol binding site. The 'HIGH' region motif lies at 44 to 52 (TTGKPHVAY). Y166, Q170, D173, and Q188 together coordinate L-tyrosine. Residues Q170 and D173 each contribute to the trans-resveratrol site. N6-acetyllysine is present on K197. S205 bears the Phosphoserine mark. N6-acetyllysine is present on K206. Residues 222–226 (KMSSS) carry the 'KMSKS' region motif. Residues 242-247 (KKKLKK) carry the Nuclear localization signal motif. The segment at 339–363 (AAYPDPSKQKPTAKGPAKSSEPEEI) is disordered. In terms of domain architecture, tRNA-binding spans 364-468 (IPSRLDIRVG…AGSAPGERVF (105 aa)). Phosphoserine is present on S386. K474, K482, and K490 each carry N6-acetyllysine.

The protein belongs to the class-I aminoacyl-tRNA synthetase family. As to quaternary structure, homodimer. Interacts (when binding to resveratrol) with PARP1; interaction stimulates the poly-ADP-ribosyltransferase activity of PARP1.

It localises to the cytoplasm. It is found in the nucleus. It carries out the reaction tRNA(Tyr) + L-tyrosine + ATP = L-tyrosyl-tRNA(Tyr) + AMP + diphosphate + H(+). Its activity is regulated as follows. Resveratrol strongly inhibits the tyrosine--tRNA ligase activity. In terms of biological role, tyrosine--tRNA ligase that catalyzes the attachment of tyrosine to tRNA(Tyr) in a two-step reaction: tyrosine is first activated by ATP to form Tyr-AMP and then transferred to the acceptor end of tRNA(Tyr). Also acts as a positive regulator of poly-ADP-ribosylation in the nucleus, independently of its tyrosine--tRNA ligase activity. Activity is switched upon resveratrol-binding: resveratrol strongly inhibits the tyrosine--tRNA ligase activity and promotes relocalization to the nucleus, where YARS1 specifically stimulates the poly-ADP-ribosyltransferase activity of PARP1. The sequence is that of Tyrosine--tRNA ligase, cytoplasmic (Yars1) from Rattus norvegicus (Rat).